Consider the following 49-residue polypeptide: Osteocalcin (49 aa).

The region spanning 1 to 47 is the Gla domain; it reads YLDHGLGAPAPYVDPLEPKREVCELNPDCDELADQMGFQEAYRRFYG. At proline 9 the chain carries 4-hydroxyproline. Ca(2+) contacts are provided by glutamate 17, glutamate 21, glutamate 24, and aspartate 30. 3 positions are modified to 4-carboxyglutamate: glutamate 17, glutamate 21, and glutamate 24. A disulfide bond links cysteine 23 and cysteine 29.

It belongs to the osteocalcin/matrix Gla protein family. Gamma-carboxyglutamic acid residues are formed by vitamin K dependent carboxylation. These residues are essential for the binding of calcium.

It localises to the secreted. Its function is as follows. The carboxylated form is one of the main organic components of the bone matrix, which constitutes 1-2% of the total bone protein: it acts as a negative regulator of bone formation and is required to limit bone formation without impairing bone resorption or mineralization. The carboxylated form binds strongly to apatite and calcium. Functionally, the uncarboxylated form acts as a hormone secreted by osteoblasts, which regulates different cellular processes, such as energy metabolism, male fertility and brain development. Regulates of energy metabolism by acting as a hormone favoring pancreatic beta-cell proliferation, insulin secretion and sensitivity and energy expenditure. Uncarboxylated osteocalcin hormone also promotes testosterone production in the testes: acts as a ligand for G protein-coupled receptor GPRC6A at the surface of Leydig cells, initiating a signaling response that promotes the expression of enzymes required for testosterone synthesis in a CREB-dependent manner. Also acts as a regulator of brain development: osteocalcin hormone crosses the blood-brain barrier and acts as a ligand for GPR158 on neurons, initiating a signaling response that prevents neuronal apoptosis in the hippocampus, favors the synthesis of all monoamine neurotransmitters and inhibits that of gamma-aminobutyric acid (GABA). Osteocalcin also crosses the placenta during pregnancy and maternal osteocalcin is required for fetal brain development. The protein is Osteocalcin of Lama guanicoe (Guanaco).